Consider the following 492-residue polypeptide: Catalase isozyme 1 (492 aa).

Residues histidine 65 and asparagine 138 contribute to the active site. Tyrosine 348 provides a ligand contact to heme.

Belongs to the catalase family. Homotetramer. Heme serves as cofactor.

It is found in the peroxisome. The catalysed reaction is 2 H2O2 = O2 + 2 H2O. Functionally, occurs in almost all aerobically respiring organisms and serves to protect cells from the toxic effects of hydrogen peroxide. This Solanum lycopersicum (Tomato) protein is Catalase isozyme 1 (CAT1).